The primary structure comprises 312 residues: 6-hydroxy-3-succinoylpyridine 3-monooxygenase HspA (312 aa).

The 197-residue stretch at 14–210 (IYIDGYNFYY…RSANTDLIKF (197 aa)) folds into the NYN domain.

The catalysed reaction is 4-(6-hydroxypyridin-3-yl)-4-oxobutanoate + 2 NADH + O2 + 2 H(+) = 2,5-dihydroxypyridine + succinate semialdehyde + 2 NAD(+) + H2O. Its pathway is alkaloid degradation; nicotine degradation. In terms of biological role, involved in the nicotine degradation. Catalyzes the cleavage of 6-hydroxy-3-succinoylpyridine (HSP) by incorporation of oxygen at the 3-position to produce to 2,5-dihydroxypyridine (DHP) and succinic semialdehyde. This is 6-hydroxy-3-succinoylpyridine 3-monooxygenase HspA from Pseudomonas putida (strain DSM 28022 / S16).